We begin with the raw amino-acid sequence, 159 residues long: Globin CTT-W (159 aa).

An N-terminal signal peptide occupies residues 1–16 (MKFLVILTLCIAGAIA). Residues 17–159 (HCDKAPFIKA…HHAIVYSILE (143 aa)) enclose the Globin domain. 2 residues coordinate heme b: His-73 and His-108.

It belongs to the globin family.

This is Globin CTT-W (CTT-W) from Chironomus thummi thummi (Midge).